The sequence spans 323 residues: tRNA U34 carboxymethyltransferase (323 aa).

Residues lysine 91, tryptophan 105, lysine 110, glycine 130, 152-154 (DPT), 181-182 (IE), methionine 196, tyrosine 200, and arginine 315 contribute to the carboxy-S-adenosyl-L-methionine site.

This sequence belongs to the class I-like SAM-binding methyltransferase superfamily. CmoB family. Homotetramer.

The catalysed reaction is carboxy-S-adenosyl-L-methionine + 5-hydroxyuridine(34) in tRNA = 5-carboxymethoxyuridine(34) in tRNA + S-adenosyl-L-homocysteine + H(+). Catalyzes carboxymethyl transfer from carboxy-S-adenosyl-L-methionine (Cx-SAM) to 5-hydroxyuridine (ho5U) to form 5-carboxymethoxyuridine (cmo5U) at position 34 in tRNAs. The polypeptide is tRNA U34 carboxymethyltransferase (Escherichia coli O139:H28 (strain E24377A / ETEC)).